Here is a 283-residue protein sequence, read N- to C-terminus: Protein/nucleic acid deglycase HchA (283 aa).

Zn(2+) is bound by residues His86, Glu91, and His123. Cys185 functions as the Nucleophile in the catalytic mechanism.

Belongs to the peptidase C56 family. HchA subfamily. As to quaternary structure, homodimer.

It is found in the cytoplasm. It carries out the reaction N(omega)-(1-hydroxy-2-oxopropyl)-L-arginyl-[protein] + H2O = lactate + L-arginyl-[protein] + H(+). The enzyme catalyses N(6)-(1-hydroxy-2-oxopropyl)-L-lysyl-[protein] + H2O = lactate + L-lysyl-[protein] + H(+). It catalyses the reaction S-(1-hydroxy-2-oxopropyl)-L-cysteinyl-[protein] + H2O = lactate + L-cysteinyl-[protein] + H(+). The catalysed reaction is N(omega)-(1-hydroxy-2-oxoethyl)-L-arginyl-[protein] + H2O = L-arginyl-[protein] + glycolate + H(+). It carries out the reaction N(6)-(1-hydroxy-2-oxoethyl)-L-lysyl-[protein] + H2O = glycolate + L-lysyl-[protein] + H(+). The enzyme catalyses S-(1-hydroxy-2-oxoethyl)-L-cysteinyl-[protein] + H2O = glycolate + L-cysteinyl-[protein] + H(+). It catalyses the reaction N(2)-(1-hydroxy-2-oxopropyl)-dGTP + H2O = lactate + dGTP + H(+). The catalysed reaction is N(2)-(1-hydroxy-2-oxopropyl)-GTP + H2O = lactate + GTP + H(+). It carries out the reaction N(2)-(1-hydroxy-2-oxopropyl)-GDP + H2O = lactate + GDP + H(+). The enzyme catalyses N(2)-(1-hydroxy-2-oxopropyl)-GMP + H2O = lactate + GMP + H(+). It catalyses the reaction N(2)-(1-hydroxy-2-oxoethyl)-dGTP + H2O = dGTP + glycolate + H(+). The catalysed reaction is N(2)-(1-hydroxy-2-oxoethyl)-GTP + H2O = glycolate + GTP + H(+). It carries out the reaction N(2)-(1-hydroxy-2-oxoethyl)-GDP + H2O = glycolate + GDP + H(+). The enzyme catalyses N(2)-(1-hydroxy-2-oxoethyl)-GMP + H2O = glycolate + GMP + H(+). It catalyses the reaction an N(2)-(1-hydroxy-2-oxopropyl)-guanosine in RNA + H2O = a guanosine in RNA + lactate + H(+). The catalysed reaction is an N(2)-(1-hydroxy-2-oxopropyl)-2'-deoxyguanosine in DNA + H2O = a 2'-deoxyguanosine in DNA + lactate + H(+). It carries out the reaction an N(2)-(1-hydroxy-2-oxoethyl)-guanosine in RNA + H2O = a guanosine in RNA + glycolate + H(+). The enzyme catalyses an N(2)-(1-hydroxy-2-oxoethyl)-2'-deoxyguanosine in DNA + H2O = a 2'-deoxyguanosine in DNA + glycolate + H(+). Functionally, protein and nucleotide deglycase that catalyzes the deglycation of the Maillard adducts formed between amino groups of proteins or nucleotides and reactive carbonyl groups of glyoxals. Thus, functions as a protein deglycase that repairs methylglyoxal- and glyoxal-glycated proteins, and releases repaired proteins and lactate or glycolate, respectively. Deglycates cysteine, arginine and lysine residues in proteins, and thus reactivates these proteins by reversing glycation by glyoxals. Acts on early glycation intermediates (hemithioacetals and aminocarbinols), preventing the formation of Schiff bases and advanced glycation endproducts (AGE). Also functions as a nucleotide deglycase able to repair glycated guanine in the free nucleotide pool (GTP, GDP, GMP, dGTP) and in DNA and RNA. Is thus involved in a major nucleotide repair system named guanine glycation repair (GG repair), dedicated to reversing methylglyoxal and glyoxal damage via nucleotide sanitization and direct nucleic acid repair. Plays an important role in protecting cells from carbonyl stress. This chain is Protein/nucleic acid deglycase HchA, found in Escherichia coli O45:K1 (strain S88 / ExPEC).